The chain runs to 146 residues: D-aminoacyl-tRNA deacylase (146 aa).

The Gly-cisPro motif, important for rejection of L-amino acids signature appears at 138-139 (GP).

It belongs to the DTD family. As to quaternary structure, homodimer.

It localises to the cytoplasm. The catalysed reaction is glycyl-tRNA(Ala) + H2O = tRNA(Ala) + glycine + H(+). It carries out the reaction a D-aminoacyl-tRNA + H2O = a tRNA + a D-alpha-amino acid + H(+). Its function is as follows. An aminoacyl-tRNA editing enzyme that deacylates mischarged D-aminoacyl-tRNAs. Also deacylates mischarged glycyl-tRNA(Ala), protecting cells against glycine mischarging by AlaRS. Acts via tRNA-based rather than protein-based catalysis; rejects L-amino acids rather than detecting D-amino acids in the active site. By recycling D-aminoacyl-tRNA to D-amino acids and free tRNA molecules, this enzyme counteracts the toxicity associated with the formation of D-aminoacyl-tRNA entities in vivo and helps enforce protein L-homochirality. This Tolumonas auensis (strain DSM 9187 / NBRC 110442 / TA 4) protein is D-aminoacyl-tRNA deacylase.